A 337-amino-acid polypeptide reads, in one-letter code: 2-ketoarginine methyltransferase (337 aa).

It belongs to the 2-ketoarginine methyltransferase family.

The catalysed reaction is 5-guanidino-2-oxopentanoate + S-adenosyl-L-methionine = (3R)-5-guanidino-3-methyl-2-oxopentanoate + S-adenosyl-L-homocysteine + H(+). The protein operates within antibiotic biosynthesis. Its function is as follows. S-adenosyl-L-methionine-dependent methyltransferase involved in the formation of the rare amino acid 3-methylarginine (MeArg), which is incorporated into the peptidyl nucleoside antibiotic arginomycin. Transfers the methyl group from S-adenosyl-L-methionine into 5-guanidino-2-oxopentanoate acid to yield 5-guanidino-3-methyl-2-oxopentanoate, a precursor of MeArg. The protein is 2-ketoarginine methyltransferase of Streptomyces arginensis.